Reading from the N-terminus, the 447-residue chain is ATP-dependent protease ATPase subunit HslU (447 aa).

Residues isoleucine 18, 60–65 (GVGKTE), aspartate 259, glutamate 325, and arginine 397 contribute to the ATP site.

This sequence belongs to the ClpX chaperone family. HslU subfamily. In terms of assembly, a double ring-shaped homohexamer of HslV is capped on each side by a ring-shaped HslU homohexamer. The assembly of the HslU/HslV complex is dependent on binding of ATP.

The protein localises to the cytoplasm. Its function is as follows. ATPase subunit of a proteasome-like degradation complex; this subunit has chaperone activity. The binding of ATP and its subsequent hydrolysis by HslU are essential for unfolding of protein substrates subsequently hydrolyzed by HslV. HslU recognizes the N-terminal part of its protein substrates and unfolds these before they are guided to HslV for hydrolysis. This is ATP-dependent protease ATPase subunit HslU from Burkholderia pseudomallei (strain 668).